The sequence spans 487 residues: N-succinylglutamate 5-semialdehyde dehydrogenase (487 aa).

An NAD(+)-binding site is contributed by G221–G226. Catalysis depends on residues E244 and C278.

It belongs to the aldehyde dehydrogenase family. AstD subfamily.

It catalyses the reaction N-succinyl-L-glutamate 5-semialdehyde + NAD(+) + H2O = N-succinyl-L-glutamate + NADH + 2 H(+). Its pathway is amino-acid degradation; L-arginine degradation via AST pathway; L-glutamate and succinate from L-arginine: step 4/5. Functionally, catalyzes the NAD-dependent reduction of succinylglutamate semialdehyde into succinylglutamate. This is N-succinylglutamate 5-semialdehyde dehydrogenase from Paraburkholderia xenovorans (strain LB400).